The following is a 291-amino-acid chain: Ribosomal RNA small subunit methyltransferase A (291 aa).

S-adenosyl-L-methionine-binding residues include histidine 37, leucine 39, glycine 64, glutamate 85, aspartate 110, and asparagine 131.

This sequence belongs to the class I-like SAM-binding methyltransferase superfamily. rRNA adenine N(6)-methyltransferase family. RsmA subfamily.

It is found in the cytoplasm. The catalysed reaction is adenosine(1518)/adenosine(1519) in 16S rRNA + 4 S-adenosyl-L-methionine = N(6)-dimethyladenosine(1518)/N(6)-dimethyladenosine(1519) in 16S rRNA + 4 S-adenosyl-L-homocysteine + 4 H(+). In terms of biological role, specifically dimethylates two adjacent adenosines (A1518 and A1519) in the loop of a conserved hairpin near the 3'-end of 16S rRNA in the 30S particle. May play a critical role in biogenesis of 30S subunits. This chain is Ribosomal RNA small subunit methyltransferase A, found in Dehalococcoides mccartyi (strain ATCC BAA-2266 / KCTC 15142 / 195) (Dehalococcoides ethenogenes (strain 195)).